The chain runs to 658 residues: DNA mismatch repair protein MutL (658 aa).

The span at 114–130 (RQEDSSHATQVKAEDGK) shows a compositional bias: basic and acidic residues. The segment at 114–137 (RQEDSSHATQVKAEDGKLSSPTAA) is disordered.

It belongs to the DNA mismatch repair MutL/HexB family.

In terms of biological role, this protein is involved in the repair of mismatches in DNA. It is required for dam-dependent methyl-directed DNA mismatch repair. May act as a 'molecular matchmaker', a protein that promotes the formation of a stable complex between two or more DNA-binding proteins in an ATP-dependent manner without itself being part of a final effector complex. This is DNA mismatch repair protein MutL from Neisseria meningitidis serogroup C / serotype 2a (strain ATCC 700532 / DSM 15464 / FAM18).